The primary structure comprises 67 residues: uncharacterized protein (67 aa).

2 helical membrane passes run 10–30 (EFFIYIFLFIDKANVESIIMW) and 40–60 (LMVGVWVVILFLTWFFLWMVF).

The protein belongs to the plectrovirus ORF10 family.

It localises to the host membrane. This is an uncharacterized protein from Spiroplasma melliferum (SpV1).